A 143-amino-acid chain; its full sequence is Large-conductance mechanosensitive channel (143 aa).

Transmembrane regions (helical) follow at residues 16–36 and 84–104; these read VIDL…VTAL and INTV…VKLI.

This sequence belongs to the MscL family. Homopentamer.

Its subcellular location is the cell inner membrane. Functionally, channel that opens in response to stretch forces in the membrane lipid bilayer. May participate in the regulation of osmotic pressure changes within the cell. The polypeptide is Large-conductance mechanosensitive channel (Xanthomonas campestris pv. campestris (strain 8004)).